We begin with the raw amino-acid sequence, 409 residues long: Protein ROOT PRIMORDIUM DEFECTIVE 1 (409 aa).

The PORR domain maps to 47 to 386 (VRDHGYDNYM…RLAELVLMSP (340 aa)).

Expressed in roots, hypocotyls, cotyledons and shoot apex.

Its function is as follows. Involved in pre-arranging the maintenance of the active cell proliferation during root primordium development. Does not seem to be involved in cell cycle progression. This Arabidopsis thaliana (Mouse-ear cress) protein is Protein ROOT PRIMORDIUM DEFECTIVE 1 (RPD1).